The chain runs to 84 residues: Small ribosomal subunit protein bS20 (84 aa).

This sequence belongs to the bacterial ribosomal protein bS20 family.

In terms of biological role, binds directly to 16S ribosomal RNA. The sequence is that of Small ribosomal subunit protein bS20 from Azobacteroides pseudotrichonymphae genomovar. CFP2.